The chain runs to 345 residues: Ferrochelatase (345 aa).

Fe cation contacts are provided by His215 and Glu296.

This sequence belongs to the ferrochelatase family.

It is found in the cytoplasm. It carries out the reaction heme b + 2 H(+) = protoporphyrin IX + Fe(2+). It functions in the pathway porphyrin-containing compound metabolism; protoheme biosynthesis; protoheme from protoporphyrin-IX: step 1/1. Functionally, catalyzes the ferrous insertion into protoporphyrin IX. This Nitrobacter hamburgensis (strain DSM 10229 / NCIMB 13809 / X14) protein is Ferrochelatase.